The sequence spans 645 residues: Acetyl-coenzyme A synthetase (645 aa).

Residues 190-193 and Thr309 contribute to the CoA site; that span reads RGGR. ATP-binding positions include 385 to 387, 409 to 414, Asp498, and Arg513; these read GEP and DTWWQT. Ser521 contributes to the CoA binding site. Arg524 contacts ATP. Mg(2+) is bound by residues Val535, His537, and Val540. Arg582 contributes to the CoA binding site. At Lys607 the chain carries N6-acetyllysine.

This sequence belongs to the ATP-dependent AMP-binding enzyme family. Requires Mg(2+) as cofactor. In terms of processing, acetylated. Deacetylation by the SIR2-homolog deacetylase activates the enzyme.

It catalyses the reaction acetate + ATP + CoA = acetyl-CoA + AMP + diphosphate. Its function is as follows. Catalyzes the conversion of acetate into acetyl-CoA (AcCoA), an essential intermediate at the junction of anabolic and catabolic pathways. AcsA undergoes a two-step reaction. In the first half reaction, AcsA combines acetate with ATP to form acetyl-adenylate (AcAMP) intermediate. In the second half reaction, it can then transfer the acetyl group from AcAMP to the sulfhydryl group of CoA, forming the product AcCoA. The polypeptide is Acetyl-coenzyme A synthetase (Methylocella silvestris (strain DSM 15510 / CIP 108128 / LMG 27833 / NCIMB 13906 / BL2)).